The chain runs to 133 residues: Putative nickel-responsive regulator (133 aa).

Ni(2+) is bound by residues H74, H85, H87, and C93.

Belongs to the transcriptional regulatory CopG/NikR family. The cofactor is Ni(2+).

In terms of biological role, transcriptional regulator. The sequence is that of Putative nickel-responsive regulator from Saccharolobus islandicus (strain Y.N.15.51 / Yellowstone #2) (Sulfolobus islandicus).